An 891-amino-acid polypeptide reads, in one-letter code: MAAAAALWQPQEEGLREICTLLDAHISPNSDQARIWQQLQHYSQFPDFNNYLVFLLARGEGKSFEARQAAGLLLKNNLRATFSSMPPASQQYVKSELLPCIGATNKAIRSTVGTVISVLFQIVRVAGWIELFQALHQCLDSNDLDHMEGAMDAIYKICEDVPEELDVDVPGLPERPINVFMPRLLQFFQSTHAILRKLALGCINQYIVVMPAALYMSMDQYLQGLFNLAKDPSADVRKLVCSAWVQLIEVRPSILEPHLKNVTELMLQANKDSDDEVALEACEFWSAYCDVSMPPEGLREFLPRLIPTLLSNMSYSDDDESLADAEEDESFPDRDQDLKPRFHASRLHGSETGEDDDDDDAVNVWNLRKCSAAGLDVLSNVFGDDILPTLMPLIQQNLARTDDDAWKEREAAVLSIGAIAEGCITGLYPHLPQIVAFLIPLLDDKFPLIRSITCWTLSRYSKFIVQSLEHPNGREQFDKILLGLLRRVLDTNKRVQEAACSAFATLEEEAAEELVPHLGIILQHLMCAYGKYQRRNLRILYDALGTLADAVGAELNQAKYLDIFMPPLITKWQQLANSDKDLFPLLECFTSIAQALGPGFSQFAEPVFQRCINLIQSQHLAKVDPAAAGALYDKEFIVCALDLLSGLAEGLGAGIESLVSQSSLRDILLQCCMDEAADVRQSALALLGDLSRVCPIHLHPRLQEFLNVAAKQLNPQCVKEAVSVANNACWAIGELAIKIGKEISPVVITVVSCLVPILKSPEGLNKSLLENSAITLGRLCWVCPDIVAPHMDHFMQAWCNALCMIRDDFEKEDAFHGLCAMVAANPTGAVGSLTFICQACASWNEIKSEGLHNEVCQILNGYKQMLGSGGWEQCMSTLEPAVVQRLGRYGV.

HEAT repeat units follow at residues 14 to 40, 45 to 83, 92 to 125, 131 to 168, 178 to 208, 221 to 248, 260 to 287, 303 to 381, 389 to 420, 432 to 459, 477 to 510, 518 to 551, 559 to 597, 605 to 653, 664 to 695, 703 to 740, 748 to 784, 792 to 825, and 834 to 866; these read GLRE…QQLQ, FPDF…ATFS, YVKS…IVRV, LFQA…LDVD, NVFM…QYIV, YLQG…VQLI, KNVT…FWSA, PRLI…LSNV, TLMP…GAIA, PQIV…TLSR, FDKI…EEEA, LGII…ADAV, KYLD…QALG, EPVF…GLGA, LRDI…RVCP, QEFL…IKIG, ITVV…WVCP, DHFM…VAAN, and TFIC…KQML. The region spanning 35–103 is the Importin N-terminal domain; sequence IWQQLQHYSQ…KSELLPCIGA (69 aa). Residues 317–330 are compositionally biased toward acidic residues; that stretch reads DDDESLADAEEDES. The segment at 317-337 is disordered; that stretch reads DDDESLADAEEDESFPDRDQD.

It belongs to the importin beta family. Importin beta-2 subfamily.

Its subcellular location is the cytoplasm. The protein localises to the nucleus. It is found in the nucleoplasm. In terms of biological role, functions in nuclear protein import as nuclear transport receptor. Serves as receptor for nuclear localization signals (NLS) in cargo substrates. Is thought to mediate docking of the importin/substrate complex to the nuclear pore complex (NPC) through binding to nucleoporin and the complex is subsequently translocated through the pore by an energy requiring, Ran-dependent mechanism. At the nucleoplasmic side of the NPC, Ran binds to the importin, the importin/substrate complex dissociates and importin is re-exported from the nucleus to the cytoplasm where GTP hydrolysis releases Ran. The directionality of nuclear import is thought to be conferred by an asymmetric distribution of the GTP- and GDP-bound forms of Ran between the cytoplasm and nucleus. This Oryza sativa subsp. japonica (Rice) protein is Transportin-1 (TRN1).